Here is a 416-residue protein sequence, read N- to C-terminus: Tyrosine--tRNA ligase (416 aa).

Y34 is an L-tyrosine binding site. The 'HIGH' region signature appears at 39–48 (PTGDSLHIGH). Y165 and Q169 together coordinate L-tyrosine. Residues 227-231 (KFGKT) carry the 'KMSKS' region motif. K230 is an ATP binding site. Residues 349–416 (ENIIIWLTDN…KKHYYLARVK (68 aa)) enclose the S4 RNA-binding domain.

Belongs to the class-I aminoacyl-tRNA synthetase family. TyrS type 1 subfamily. As to quaternary structure, homodimer.

The protein resides in the cytoplasm. The enzyme catalyses tRNA(Tyr) + L-tyrosine + ATP = L-tyrosyl-tRNA(Tyr) + AMP + diphosphate + H(+). Functionally, catalyzes the attachment of tyrosine to tRNA(Tyr) in a two-step reaction: tyrosine is first activated by ATP to form Tyr-AMP and then transferred to the acceptor end of tRNA(Tyr). The sequence is that of Tyrosine--tRNA ligase from Limosilactobacillus reuteri (strain DSM 20016) (Lactobacillus reuteri).